The chain runs to 295 residues: tRNA-cytidine(32) 2-sulfurtransferase (295 aa).

The PP-loop motif signature appears at 59–64; that stretch reads SGGKDS. Cys-134, Cys-137, and Cys-225 together coordinate [4Fe-4S] cluster.

Belongs to the TtcA family. As to quaternary structure, homodimer. Mg(2+) serves as cofactor. [4Fe-4S] cluster is required as a cofactor.

Its subcellular location is the cytoplasm. It carries out the reaction cytidine(32) in tRNA + S-sulfanyl-L-cysteinyl-[cysteine desulfurase] + AH2 + ATP = 2-thiocytidine(32) in tRNA + L-cysteinyl-[cysteine desulfurase] + A + AMP + diphosphate + H(+). It participates in tRNA modification. Functionally, catalyzes the ATP-dependent 2-thiolation of cytidine in position 32 of tRNA, to form 2-thiocytidine (s(2)C32). The sulfur atoms are provided by the cysteine/cysteine desulfurase (IscS) system. In Ruegeria sp. (strain TM1040) (Silicibacter sp.), this protein is tRNA-cytidine(32) 2-sulfurtransferase.